The primary structure comprises 503 residues: Maturase K (503 aa).

Belongs to the intron maturase 2 family. MatK subfamily.

It localises to the plastid. It is found in the chloroplast. Functionally, usually encoded in the trnK tRNA gene intron. Probably assists in splicing its own and other chloroplast group II introns. In Rubus ursinus (California blackberry), this protein is Maturase K.